A 496-amino-acid chain; its full sequence is Latent membrane protein 2 (496 aa).

The disordered stretch occupies residues Met-1–Ser-108. The Cytoplasmic portion of the chain corresponds to Met-1–Val-123. Over residues Asn-27–Thr-41 the composition is skewed to polar residues. The PPxY motif motif lies at Pro-97–Tyr-101. Residue Tyr-112 is modified to Phosphotyrosine; by host. The chain crosses the membrane as a helical span at residues Cys-124–Phe-144. Topologically, residues Thr-145–Ser-147 are extracellular. Residues Val-148–Ala-168 traverse the membrane as a helical segment. The Cytoplasmic segment spans residues Ser-169–Lys-177. Residues Leu-178–Trp-197 form a helical membrane-spanning segment. At Arg-198–Ala-210 the chain is on the extracellular side. The helical transmembrane segment at Leu-211 to Ile-231 threads the bilayer. Residues Leu-232 to Arg-240 are Cytoplasmic-facing. The helical transmembrane segment at Leu-241–Val-261 threads the bilayer. Residues Leu-262–Pro-266 lie on the Extracellular side of the membrane. Residues Leu-267–Leu-287 traverse the membrane as a helical segment. The Cytoplasmic segment spans residues Ser-288–Thr-295. The helical transmembrane segment at Leu-296–Gly-316 threads the bilayer. A topological domain (extracellular) is located at residue Thr-317. A helical transmembrane segment spans residues Leu-318–Cys-338. At Ser-339–Arg-353 the chain is on the cytoplasmic side. The chain crosses the membrane as a helical span at residues Leu-354 to Ile-374. At Leu-375–Phe-387 the chain is on the extracellular side. The helical transmembrane segment at Ile-388–Ile-408 threads the bilayer. Topologically, residues Leu-409–Pro-421 are cytoplasmic. The helical transmembrane segment at Val-422 to Met-442 threads the bilayer. Topologically, residues Thr-443–Ser-448 are extracellular. Residues Ala-449–Ile-469 traverse the membrane as a helical segment. Residues Arg-470–Val-496 are Cytoplasmic-facing.

It belongs to the herpesviridae LMP-2 family. The cytoplasmic N-terminal domain interacts with human SRC family protein tyrosine kinases SYK and LYN. Binds human ITCH, WWP2 and NEDD4L. Phosphorylated on cytoplasmic N-terminal tyrosine residues, possibly by human LYN. In terms of processing, can be ubiquitinated by human ITCH and WWP2 on the N-terminus in a lysine-independent manner.

The protein localises to the host cell membrane. The protein resides in the host endomembrane system. It is found in the host cytoplasm. Its subcellular location is the host perinuclear region. Its function is as follows. Maintains EBV latent infection of B-lymphocyte, by preventing lytic reactivation of the virus in response to surface immunoglobulin (sIg) cross-linking. Acts like a dominant negative inhibitor of the sIg-associated protein tyrosine kinases, LYN and SYK. Also blocks translocation of the B-cell antigen receptor (BCR) into lipid rafts, preventing the subsequent signaling and accelerated internalization of the BCR upon BCR cross-linking. Serves as a molecular scaffold to recruit SYK, LYN and E3 protein-ubiquitin ligases, such as ITCH and NEDD4L, leading to ubiquitination and potential degradation of both tyrosines kinases. Possesses a constitutive signaling activity in non-transformed cells, inducing bypass of normal B lymphocyte developmental checkpoints allowing immunoglobulin-negative cells to colonize peripheral lymphoid organs. May be a negative regulator of isoform LMP2A. The chain is Latent membrane protein 2 (LMP2) from Homo sapiens (Human).